A 486-amino-acid chain; its full sequence is Aspartyl/glutamyl-tRNA(Asn/Gln) amidotransferase subunit B (486 aa).

It belongs to the GatB/GatE family. GatB subfamily. As to quaternary structure, heterotrimer of A, B and C subunits.

It catalyses the reaction L-glutamyl-tRNA(Gln) + L-glutamine + ATP + H2O = L-glutaminyl-tRNA(Gln) + L-glutamate + ADP + phosphate + H(+). The catalysed reaction is L-aspartyl-tRNA(Asn) + L-glutamine + ATP + H2O = L-asparaginyl-tRNA(Asn) + L-glutamate + ADP + phosphate + 2 H(+). Its function is as follows. Allows the formation of correctly charged Asn-tRNA(Asn) or Gln-tRNA(Gln) through the transamidation of misacylated Asp-tRNA(Asn) or Glu-tRNA(Gln) in organisms which lack either or both of asparaginyl-tRNA or glutaminyl-tRNA synthetases. The reaction takes place in the presence of glutamine and ATP through an activated phospho-Asp-tRNA(Asn) or phospho-Glu-tRNA(Gln). The sequence is that of Aspartyl/glutamyl-tRNA(Asn/Gln) amidotransferase subunit B from Herminiimonas arsenicoxydans.